The following is a 257-amino-acid chain: MSVRATARLRAEPDGRDGTALPVLAGEGPLALRRTRSPQAAYARVTVVGAMSAPLNGDRLAVEAEVTDGAHLTVDAAAATVALPGPRPDADPSTYGVDLTVGEGAVLHWLPEQLVSAHGSDLRMTTRVRLAPTARLLLREEQILGRHGEPTGALTTRLTVHHAGRPLLDQQLAYGPGAPGGWDGPAVLAGHRAVGQLLLADPSFGDAPLPARLLGPTAALTPLAGPAVLVTAVAADARLLRGMLDEAMRELLDTLKA.

A disordered region spans residues 1 to 22; sequence MSVRATARLRAEPDGRDGTALP.

Belongs to the UreD family. UreD, UreF and UreG form a complex that acts as a GTP-hydrolysis-dependent molecular chaperone, activating the urease apoprotein by helping to assemble the nickel containing metallocenter of UreC. The UreE protein probably delivers the nickel.

Its subcellular location is the cytoplasm. Its function is as follows. Required for maturation of urease via the functional incorporation of the urease nickel metallocenter. The chain is Urease accessory protein UreD 3 from Streptomyces griseus subsp. griseus (strain JCM 4626 / CBS 651.72 / NBRC 13350 / KCC S-0626 / ISP 5235).